The sequence spans 350 residues: UDP-3-O-acylglucosamine N-acyltransferase (350 aa).

Histidine 244 acts as the Proton acceptor in catalysis.

It belongs to the transferase hexapeptide repeat family. LpxD subfamily. As to quaternary structure, homotrimer.

The enzyme catalyses a UDP-3-O-[(3R)-3-hydroxyacyl]-alpha-D-glucosamine + a (3R)-hydroxyacyl-[ACP] = a UDP-2-N,3-O-bis[(3R)-3-hydroxyacyl]-alpha-D-glucosamine + holo-[ACP] + H(+). It participates in bacterial outer membrane biogenesis; LPS lipid A biosynthesis. In terms of biological role, catalyzes the N-acylation of UDP-3-O-acylglucosamine using 3-hydroxyacyl-ACP as the acyl donor. Is involved in the biosynthesis of lipid A, a phosphorylated glycolipid that anchors the lipopolysaccharide to the outer membrane of the cell. The polypeptide is UDP-3-O-acylglucosamine N-acyltransferase (Herminiimonas arsenicoxydans).